A 249-amino-acid polypeptide reads, in one-letter code: Enolase-phosphatase E1 (249 aa).

Residues Asp-9 and Glu-11 each coordinate Mg(2+). Substrate-binding positions include 137 to 138 and Lys-177; that span reads SS. Asp-204 contacts Mg(2+).

The protein belongs to the HAD-like hydrolase superfamily. MasA/MtnC family. Monomer. It depends on Mg(2+) as a cofactor.

The protein resides in the cytoplasm. It is found in the nucleus. It carries out the reaction 5-methylsulfanyl-2,3-dioxopentyl phosphate + H2O = 1,2-dihydroxy-5-(methylsulfanyl)pent-1-en-3-one + phosphate. It functions in the pathway amino-acid biosynthesis; L-methionine biosynthesis via salvage pathway; L-methionine from S-methyl-5-thio-alpha-D-ribose 1-phosphate: step 3/6. The protein operates within amino-acid biosynthesis; L-methionine biosynthesis via salvage pathway; L-methionine from S-methyl-5-thio-alpha-D-ribose 1-phosphate: step 4/6. Bifunctional enzyme that catalyzes the enolization of 2,3-diketo-5-methylthiopentyl-1-phosphate (DK-MTP-1-P) into the intermediate 2-hydroxy-3-keto-5-methylthiopentenyl-1-phosphate (HK-MTPenyl-1-P), which is then dephosphorylated to form the acireductone 1,2-dihydroxy-3-keto-5-methylthiopentene (DHK-MTPene). The protein is Enolase-phosphatase E1 of Lodderomyces elongisporus (strain ATCC 11503 / CBS 2605 / JCM 1781 / NBRC 1676 / NRRL YB-4239) (Yeast).